The chain runs to 143 residues: 18.1 kDa class I heat shock protein (143 aa).

Positions 29–143 (ENSAFVSTRI…PEVKSIEISS (115 aa)) constitute a sHSP domain.

It belongs to the small heat shock protein (HSP20) family. In terms of assembly, forms oligomeric structures.

Its subcellular location is the cytoplasm. The polypeptide is 18.1 kDa class I heat shock protein (HSP18.1) (Medicago sativa (Alfalfa)).